We begin with the raw amino-acid sequence, 41 residues long: Phospholipase A2 homolog nigroviriditoxin acidic subunit A (41 aa).

The protein belongs to the phospholipase A2 family. Group II subfamily. D49 sub-subfamily. In terms of assembly, nigroviriditoxin is a heterodimer of an acidic subunit A and a basic subunit B. As to expression, expressed by the venom gland.

Its subcellular location is the secreted. Functionally, heterodimer A-B: Nigroviriditoxin possesses phospholipase A2 (PLA2) activity. It consists of a non-covalent association of a basic PLA2 subunit B with a non-enzymatic subunit A. Its function is as follows. Subunit A: The acidic subunit of nigroviriditoxin probably is a heterotrimer of three disulfide-linked chains generated by post-translational maturation of a PLA2-like precursor. It appears to have no PLA2 activity of its own, instead inhibiting the catalytic activity of subunit B. It is not toxic to mice by itself but increases toxicity of subunit B. The sequence is that of Phospholipase A2 homolog nigroviriditoxin acidic subunit A from Bothriechis nigroviridis (Black-speckled palm pit viper).